We begin with the raw amino-acid sequence, 202 residues long: V-type ATP synthase subunit D (202 aa).

Belongs to the V-ATPase D subunit family.

In terms of biological role, produces ATP from ADP in the presence of a proton gradient across the membrane. This is V-type ATP synthase subunit D (atpD) from Borreliella burgdorferi (strain ATCC 35210 / DSM 4680 / CIP 102532 / B31) (Borrelia burgdorferi).